A 471-amino-acid chain; its full sequence is Putative F-box protein At5g36200 (471 aa).

Residues 1-46 form the F-box domain; that stretch reads MAMSDLPNDLVEEIISRVPVKSIRAVSSTCKNWNTLSNDHSFTRKL.

The sequence is that of Putative F-box protein At5g36200 from Arabidopsis thaliana (Mouse-ear cress).